Here is a 489-residue protein sequence, read N- to C-terminus: Protein TOS4 (489 aa).

Polar residues-rich tracts occupy residues Met1 to Tyr10 and Asn20 to Tyr32. The disordered stretch occupies residues Met1 to Arg101. At Ser40 the chain carries Phosphoserine. The span at Pro56–Arg68 shows a compositional bias: polar residues. Residues Ser89–Ser100 show a composition bias toward low complexity. Ser100 carries the phosphoserine modification. The 53-residue stretch at Ile118–Gln170 folds into the FHA domain. The disordered stretch occupies residues Ser316 to Glu366. Positions Arg333–Asn342 are enriched in polar residues.

This sequence belongs to the PLM2/TOS4 family. Post-translationally, phosphorylated by CDC28.

Its subcellular location is the nucleus. Binds to the promoters of genes with functions important for the G1/S (start) transition; primarily genes involved in pheromone response, polarized growth and transcription. The sequence is that of Protein TOS4 (TOS4) from Saccharomyces cerevisiae (strain ATCC 204508 / S288c) (Baker's yeast).